Here is a 495-residue protein sequence, read N- to C-terminus: Membrane-bound lytic murein transglycosylase F (495 aa).

Residues 1–29 (MEIRKLSLSTIRSIITSLSVLVLVISASA) form the signal peptide. Residues 30-273 (TLVRSTPPNV…VTKHFFERHI (244 aa)) are non-LT domain. Residues 274-495 (DEVTTGEAMV…TAAQGENLSL (222 aa)) are LT domain. Glu320 is a catalytic residue.

In the N-terminal section; belongs to the bacterial solute-binding protein 3 family. The protein in the C-terminal section; belongs to the transglycosylase Slt family.

It localises to the cell outer membrane. The catalysed reaction is Exolytic cleavage of the (1-&gt;4)-beta-glycosidic linkage between N-acetylmuramic acid (MurNAc) and N-acetylglucosamine (GlcNAc) residues in peptidoglycan, from either the reducing or the non-reducing ends of the peptidoglycan chains, with concomitant formation of a 1,6-anhydrobond in the MurNAc residue.. In terms of biological role, murein-degrading enzyme that degrades murein glycan strands and insoluble, high-molecular weight murein sacculi, with the concomitant formation of a 1,6-anhydromuramoyl product. Lytic transglycosylases (LTs) play an integral role in the metabolism of the peptidoglycan (PG) sacculus. Their lytic action creates space within the PG sacculus to allow for its expansion as well as for the insertion of various structures such as secretion systems and flagella. The chain is Membrane-bound lytic murein transglycosylase F from Cellvibrio japonicus (strain Ueda107) (Pseudomonas fluorescens subsp. cellulosa).